A 3187-amino-acid chain; its full sequence is Cilia- and flagella-associated protein 47 (3187 aa).

Positions serine 1746–proline 1869 constitute a Calponin-homology (CH) domain. The tract at residues lysine 2024–serine 2052 is disordered. Basic and acidic residues predominate over residues threonine 2026 to aspartate 2037.

Interacts with CFAP65. In terms of tissue distribution, highly expressed in spermatzoa (at protein level).

The protein localises to the cytoplasm. It localises to the cytoskeleton. The protein resides in the flagellum basal body. Plays a role in flagellar formation and sperm motility. The chain is Cilia- and flagella-associated protein 47 from Homo sapiens (Human).